A 267-amino-acid chain; its full sequence is Protein PERCC1 (267 aa).

Disordered regions lie at residues 19–88 (HHPF…QLLR), 142–163 (SLED…RPGL), and 247–267 (ACPE…PAEA). Over residues 28 to 50 (EPPETSEEEEEEEEEEEEEEGEG) the composition is skewed to acidic residues. Low complexity predominate over residues 74-83 (PEGPGSPETP).

Functionally, plays a critical role in intestinal function. Acts by promoting the development of enteroendocrine cells (EECs) of the gastrointestinal tract and pancreas. It is thereby required for normal enteroendocrine peptide hormone secretion. The polypeptide is Protein PERCC1 (Homo sapiens (Human)).